We begin with the raw amino-acid sequence, 194 residues long: Small ribosomal subunit protein uS4c (194 aa).

A disordered region spans residues 1 to 29; it reads RFKKIRRLGTLPGLTSKRPRSGSDLKNPL. An S4 RNA-binding domain is found at 82–143; it reads MRLDNILFRL…KQRSKALIQN (62 aa).

Belongs to the universal ribosomal protein uS4 family. Part of the 30S ribosomal subunit. Contacts protein S5. The interaction surface between S4 and S5 is involved in control of translational fidelity.

It localises to the plastid. It is found in the chloroplast. Its function is as follows. One of the primary rRNA binding proteins, it binds directly to 16S rRNA where it nucleates assembly of the body of the 30S subunit. Functionally, with S5 and S12 plays an important role in translational accuracy. The chain is Small ribosomal subunit protein uS4c (rps4) from Furcraea foetida (Mauritius hemp).